The sequence spans 845 residues: Protein translocase subunit SecA 1 (845 aa).

ATP is bound by residues Q85, G103–T107, and D492.

It belongs to the SecA family. As to quaternary structure, monomer and homodimer. Part of the essential Sec protein translocation apparatus which comprises SecA, SecYEG and auxiliary proteins SecDF. Other proteins may also be involved.

The protein localises to the cell membrane. Its subcellular location is the cytoplasm. It carries out the reaction ATP + H2O + cellular proteinSide 1 = ADP + phosphate + cellular proteinSide 2.. Part of the Sec protein translocase complex. Interacts with the SecYEG preprotein conducting channel. Has a central role in coupling the hydrolysis of ATP to the transfer of proteins into and across the cell membrane, serving as an ATP-driven molecular motor driving the stepwise translocation of polypeptide chains across the membrane. This Corynebacterium efficiens (strain DSM 44549 / YS-314 / AJ 12310 / JCM 11189 / NBRC 100395) protein is Protein translocase subunit SecA 1.